The following is a 248-amino-acid chain: Ribonuclease PH (248 aa).

Residues Arg-86 and 124-126 (GTR) contribute to the phosphate site.

It belongs to the RNase PH family. As to quaternary structure, homohexameric ring arranged as a trimer of dimers.

The enzyme catalyses tRNA(n+1) + phosphate = tRNA(n) + a ribonucleoside 5'-diphosphate. Functionally, phosphorolytic 3'-5' exoribonuclease that plays an important role in tRNA 3'-end maturation. Removes nucleotide residues following the 3'-CCA terminus of tRNAs; can also add nucleotides to the ends of RNA molecules by using nucleoside diphosphates as substrates, but this may not be physiologically important. Probably plays a role in initiation of 16S rRNA degradation (leading to ribosome degradation) during starvation. The sequence is that of Ribonuclease PH from Listeria innocua serovar 6a (strain ATCC BAA-680 / CLIP 11262).